Here is a 583-residue protein sequence, read N- to C-terminus: Aspartate--tRNA ligase (583 aa).

Glutamate 174 is a binding site for L-aspartate. An aspartate region spans residues 198–201 (QITK). Arginine 220 serves as a coordination point for L-aspartate. ATP-binding positions include 220–222 (RDE) and glutamine 229. An L-aspartate-binding site is contributed by histidine 443. Glutamate 477 is a binding site for ATP. Arginine 484 serves as a coordination point for L-aspartate. Position 529–532 (529–532 (GLDR)) interacts with ATP.

It belongs to the class-II aminoacyl-tRNA synthetase family. Type 1 subfamily. Homodimer.

Its subcellular location is the cytoplasm. It carries out the reaction tRNA(Asp) + L-aspartate + ATP = L-aspartyl-tRNA(Asp) + AMP + diphosphate. Its function is as follows. Catalyzes the attachment of L-aspartate to tRNA(Asp) in a two-step reaction: L-aspartate is first activated by ATP to form Asp-AMP and then transferred to the acceptor end of tRNA(Asp). The protein is Aspartate--tRNA ligase of Streptococcus thermophilus (strain ATCC BAA-250 / LMG 18311).